The following is a 541-amino-acid chain: Phenazine N-monooxygenase PhzNO1 (541 aa).

FAD-binding positions include Asp-39, 47–50 (TWYW), 59–60 (DT), Tyr-65, and Ile-112. 57 to 59 (RAD) contacts NADP(+). Residues 186-192 (TGSTGVQ), 209-210 (RS), and Trp-492 contribute to the NADP(+) site.

Belongs to the FAD-binding monooxygenase family. Requires FAD as cofactor.

It carries out the reaction 1,6-dihydroxyphenazine + NADPH + O2 = 1,6-dihydroxyphenazine N(5)-oxide + NADP(+) + H2O. The enzyme catalyses 1,6-dihydroxyphenazine N(5)-oxide + NADPH + O2 = 1,6-dihydroxyphenazine N(5),N(10)-dioxide + NADP(+) + H2O. It catalyses the reaction 1-hydroxy-6-methoxyphenazine + NADPH + O2 = 1-hydroxy-6-methoxyphenazine N(10)-oxide + NADP(+) + H2O. The catalysed reaction is quinolin-8-ol + NADPH + O2 = 8-hydroxyquinoline N-oxide + NADP(+) + H2O. In terms of biological role, involved in the biosynthesis of phenazine natural products including myxin, an N(5),N(10)-dioxide phenazine antiobiotic, which has antimicrobial activity. Catalyzes the aromatic N-oxidations of phenazines, such as 1,6-dihydroxyphenazine (DHP), 1,6-dihydroxyphenazine N(5)-oxide (DHPO) and 1-hydroxy-6-methoxyphenazine to produce DHPO, iodinin (1,6-dihydroxyphenazine N(5),N(10)-dioxide) and 1-hydroxy-6-methoxyphenazine N(10)-oxide, respectively. Also catalyzes the N-oxidation of 8-hydroxyquinoline, but not 6-hydroxyquinoline (6-HQ), quinoline, quinoxaline, quinine and 2-phenylpyridine. The sequence is that of Phenazine N-monooxygenase PhzNO1 from Lysobacter antibioticus.